The sequence spans 337 residues: Neurogenic differentiation factor 6 (337 aa).

A disordered region spans residues 43-82; the sequence is LRGKSIKRAPGEETEKEEEEEDREEEDENGLPRRRGLRKK. Over residues 54-71 the composition is skewed to acidic residues; the sequence is EETEKEEEEEDREEEDEN. The Nuclear localization signal signature appears at 80–86; the sequence is RKKKTTK. In terms of domain architecture, bHLH spans 94 to 146; the sequence is FRRQEANARERNRMHGLNDALDNLRKVVPCYSKTQKLSKIETLRLAKNYIWAL.

In terms of assembly, efficient DNA binding requires dimerization with another bHLH protein.

It is found in the nucleus. Functionally, activates E box-dependent transcription in collaboration with TCF3/E47. May be a trans-acting factor involved in the development and maintenance of the mammalian nervous system. Transactivates the promoter of its own gene. This is Neurogenic differentiation factor 6 (NEUROD6) from Homo sapiens (Human).